The primary structure comprises 286 residues: Orotidine 5'-phosphate decarboxylase (286 aa).

K97 functions as the Proton donor in the catalytic mechanism.

This sequence belongs to the OMP decarboxylase family. Type 2 subfamily.

The catalysed reaction is orotidine 5'-phosphate + H(+) = UMP + CO2. The protein operates within pyrimidine metabolism; UMP biosynthesis via de novo pathway; UMP from orotate: step 2/2. The chain is Orotidine 5'-phosphate decarboxylase (pyrF) from Clostridium acetobutylicum (strain ATCC 824 / DSM 792 / JCM 1419 / IAM 19013 / LMG 5710 / NBRC 13948 / NRRL B-527 / VKM B-1787 / 2291 / W).